Consider the following 307-residue polypeptide: Putative ankyrin repeat protein L59 (307 aa).

9 ANK repeats span residues 41-67 (LFNKLLKVALKNRNLPMVKFVCDNLEK), 68-97 (IDNKAITLAAKYNCLEILKYLHEKGLDTTN), 98-127 (HNYSALSWAARNNDFKMVEYLQHQGSDIRA), 129-157 (DDEALRWAALSGCLEMVEYLQTQGCDVRN), 158-187 (RNDFAIKYAARNGHFKLVRYLHSQGSDIRT), 188-217 (DDDYALRWAARNGHLEIVKYLHSKGCNIHA), 219-247 (GDSAIKWASMGGYLEIVEYLHGVGCDIRI), 248-277 (DNDYPIRWAASNGHLEVVEYLFSQGCDIGA), and 279-307 (NNYALMWAKKNGHDDVVEYIVLLKLLKLY).

This Acanthamoeba polyphaga (Amoeba) protein is Putative ankyrin repeat protein L59.